We begin with the raw amino-acid sequence, 157 residues long: MPRPCSVLSLDVGRKRIGLAGCDPLGITVTPIKALHRGRFDDDLPVLQQLCQDRRVQGLVVGLPLDAAGQPTAQADHCLRYGRRLAQALQLPLAWVNEHSSTWAAGERHGLKGDRSGRLDSAAAALLLDQWLREGPDLKPVQGLLGGAGAELVDGGS.

Belongs to the YqgF nuclease family.

Its subcellular location is the cytoplasm. Its function is as follows. Could be a nuclease involved in processing of the 5'-end of pre-16S rRNA. The chain is Putative pre-16S rRNA nuclease from Parasynechococcus marenigrum (strain WH8102).